A 1310-amino-acid chain; its full sequence is Rho family-interacting cell polarization regulator 2 (1310 aa).

Phosphoserine is present on residues serine 123 and serine 178. Residues methionine 196–glycine 254 form an involved in cell filopodia formation region. The stretch at asparagine 224–leucine 253 forms a coiled coil. Position 508 is a phosphoserine (serine 508). Residues serine 588–serine 608 show a composition bias toward polar residues. The tract at residues serine 588–serine 639 is disordered. The segment covering leucine 609–valine 631 has biased composition (basic and acidic residues). Position 682 is a phosphoserine (serine 682).

This sequence belongs to the RIPOR family. As to quaternary structure, homooligomer; homooligomerization is regulated by RHOC and leads to the formation of concatemers through the association of N- and C-termini. Interacts (phosphorylated form) with 14-3-3 proteins; these interactions occur during myogenic cell differentiation and also induces T cell proliferation arrest. Interacts (phosphorylated form) with HDAC6; this interaction occurs during early myogenic differentiation, prevents HDAC6 to deacetylate tubulin and also induces T cell proliferation arrest. Interacts with DYSF; this interaction occurs during early myogenic differentiation. Interacts with MYOF. Interacts (via active GTP- or inactive GDP-bound forms) with RHOA; this interaction is direct, blocks the loading of GTP to RHOA and decreases upon chemokine CCL19 stimulation in primary T lymphocytes. Interacts with RHOC. Interacts (via phosphorylated form) with YWHAB; this interaction occurs in a chemokine-dependent manner and does not compete for binding of RIPOR2 with RHOA nor blocks inhibition of RIPOR2-mediated RHOA activity. Interacts with YWHAE. Interacts with YWHAQ. Post-translationally, phosphorylated. Chemokine-induced phosphorylation in neutrophils occurs in a PKC- and AKT-dependent manner, resulting in RIPOR2 interaction with YWHAB and stabilization. Phosphorylated by PKCA, AKT1 and MAPKAPK1A; in vitro. In terms of tissue distribution, expressed in the cochlea (at protein level).

It is found in the cytoplasm. The protein localises to the cytoskeleton. It localises to the cell projection. Its subcellular location is the filopodium. The protein resides in the apical cell membrane. It is found in the stereocilium. The protein localises to the stereocilium membrane. Its function is as follows. Acts as an inhibitor of the small GTPase RHOA and plays several roles in the regulation of myoblast and hair cell differentiation, lymphocyte T proliferation and neutrophil polarization. Plays a role in fetal mononuclear myoblast differentiation by promoting filopodia and myotube formation. Maintains naive T lymphocytes in a quiescent state and prevents chemokine-induced T lymphocyte responses, such as cell adhesion, polarization and migration. Involved also in the regulation of neutrophil polarization, chemotaxis and adhesion. Required for normal development of inner and outer hair cell stereocilia within the cochlea of the inner ear. Plays a role for maintaining the structural organization of the basal domain of stereocilia. Involved in mechanosensory hair cell function. Required for normal hearing. The polypeptide is Rho family-interacting cell polarization regulator 2 (Rattus norvegicus (Rat)).